A 1726-amino-acid polypeptide reads, in one-letter code: Probable serine/threonine-protein kinase roco4 (1726 aa).

4 LRR repeats span residues 256 to 277 (KGKRLSLSRSNLSRFPMSITQM), 280 to 301 (HLVELDLSDNKITELPKDIQLL), 303 to 324 (SLRILILRGNLLEDIPLEICYL), and 326 to 347 (DLKILELQENPLNNFPLSVVQS). The region spanning 364-544 (KSETWNKVKL…KRLIHEAEKS (181 aa)) is the Roc domain. GTP-binding positions include 377 to 384 (GQEGVGKT), 428 to 432 (DFGGQ), and 487 to 490 (THSD). In terms of domain architecture, COR spans 591-787 (AINSQKERYI…RTYWRNGVLL (197 aa)). Residues 800 to 881 (SKQQQLQQQQ…STLNSQQLIN (82 aa)) are compositionally biased toward low complexity. Positions 800-890 (SKQQQLQQQQ…NPSVSPLSST (91 aa)) are disordered. The Protein kinase domain maps to 1026 to 1292 (IEYEKQIGKG…SYIVKELSEL (267 aa)). ATP contacts are provided by residues 1032–1040 (IGKGGFGLV) and K1055. The active-site Proton acceptor is the D1154. Polar residues predominate over residues 1319-1331 (ASTSSNADDGSQT). The segment at 1319-1385 (ASTSSNADDG…SSPSTSFINS (67 aa)) is disordered. Low complexity predominate over residues 1332–1348 (NNNNNNNNNNNNNNNNN). Over residues 1349-1364 (SGSSIALSPSRSFEQQ) the composition is skewed to polar residues. Residues 1365 to 1381 (TTTTTTTTTSPSSPSTS) show a composition bias toward low complexity. WD repeat units lie at residues 1422–1461 (SVHKKMEVLAGVEAGETVWTKSADSSLCFWSTKKGHLINE), 1463–1502 (KCPHTVATTMMIKVGKYIWEATNSNGIYIWDMGTMTIVQQ), 1506–1546 (PHKG…KKHS), 1589–1627 (KHSTGSITSILAMKDEVWSGGSDGRIYIWKVKNEFELQK), 1633–1670 (AHHEKITSLIHLEDNVLSGSTDKCISLFKISDPKKPFT), and 1674–1714 (HHKQ…EKKT).

It belongs to the protein kinase superfamily. TKL Ser/Thr protein kinase family. ROCO subfamily.

The enzyme catalyses L-seryl-[protein] + ATP = O-phospho-L-seryl-[protein] + ADP + H(+). It catalyses the reaction L-threonyl-[protein] + ATP = O-phospho-L-threonyl-[protein] + ADP + H(+). The protein is Probable serine/threonine-protein kinase roco4 (roco4) of Dictyostelium discoideum (Social amoeba).